Reading from the N-terminus, the 681-residue chain is PTS system glucose-specific EIICBA component (681 aa).

The PTS EIIC type-1 domain occupies 3–414; sequence KKLFGQLQRI…LKYKTPGRED (412 aa). Helical transmembrane passes span 16-36, 73-93, 126-146, 170-190, 199-219, 273-293, 303-323, 328-348, 355-375, and 383-403; these read LMLP…GTAI, MIFA…AAIA, ILGI…GALA, FVPI…ALIW, AFST…FGFI, FMQG…LAIY, VVAG…ITEP, FLFV…LSFL, VHLG…GVLP, and VIPV…FLIV. Positions 425–506 constitute a PTS EIIB type-1 domain; that stretch reads TELPYAVLEA…QQIMNGQVVE (82 aa). Cysteine 447 serves as the catalytic Phosphocysteine intermediate; for EIIB activity. The PTS EIIA type-1 domain occupies 551-655; it reads DQVFSEKMMG…SDITPIIVTQ (105 aa). The active-site Tele-phosphohistidine intermediate; for EIIA activity is histidine 603.

Its subcellular location is the cell membrane. The catalysed reaction is N(pros)-phospho-L-histidyl-[protein] + D-glucose(out) = D-glucose 6-phosphate(in) + L-histidyl-[protein]. In terms of biological role, the phosphoenolpyruvate-dependent sugar phosphotransferase system (sugar PTS), a major carbohydrate active transport system, catalyzes the phosphorylation of incoming sugar substrates concomitantly with their translocation across the cell membrane. This system is involved in glucose transport. This Staphylococcus aureus (strain JH9) protein is PTS system glucose-specific EIICBA component (ptsG).